Here is a 366-residue protein sequence, read N- to C-terminus: uncharacterized protein (366 aa).

This is an uncharacterized protein from Amazona oratrix (yellow-headed parrot).